The primary structure comprises 208 residues: EF-hand protein 5 variant 2 (208 aa).

Residues 1-35 (MQARGTVKVQGDANVDGKMSTGQHPHHQHLNSTQA) form a disordered region. EF-hand domains are found at residues 64-98 (MAEG…HLTE), 99-134 (EEFH…EVDD), 135-170 (TMAD…LAER), and 171-206 (STPE…SRVN). Ca(2+) contacts are provided by E118, D123, D148, T152, and Y154.

The chain is EF-hand protein 5 variant 2 from Trypanosoma cruzi.